Consider the following 300-residue polypeptide: 4-hydroxy-tetrahydrodipicolinate synthase (300 aa).

Position 57 (Thr-57) interacts with pyruvate. Tyr-145 acts as the Proton donor/acceptor in catalysis. Lys-173 acts as the Schiff-base intermediate with substrate in catalysis. Ile-213 is a binding site for pyruvate.

The protein belongs to the DapA family. As to quaternary structure, homotetramer; dimer of dimers.

It is found in the cytoplasm. It catalyses the reaction L-aspartate 4-semialdehyde + pyruvate = (2S,4S)-4-hydroxy-2,3,4,5-tetrahydrodipicolinate + H2O + H(+). The protein operates within amino-acid biosynthesis; L-lysine biosynthesis via DAP pathway; (S)-tetrahydrodipicolinate from L-aspartate: step 3/4. Functionally, catalyzes the condensation of (S)-aspartate-beta-semialdehyde [(S)-ASA] and pyruvate to 4-hydroxy-tetrahydrodipicolinate (HTPA). This is 4-hydroxy-tetrahydrodipicolinate synthase from Corynebacterium urealyticum (strain ATCC 43042 / DSM 7109).